The primary structure comprises 388 residues: Staphopain A (388 aa).

An N-terminal signal peptide occupies residues 1 to 25; it reads MKRNFPKLIALSLIFSLSITPIANA. A propeptide spanning residues 26-214 is cleaved from the precursor; the sequence is ESNSNIKAKD…TSQFKSNNYT (189 aa). Residues Cys238, His334, and Asn355 contribute to the active site.

This sequence belongs to the peptidase C47 family. In terms of assembly, in the cytoplasm, prematurely activated/folded ScpA forms a stable non-covalent complex with ScpB. Post-translationally, cleavage leads to the activation of ScpA probably by an auto-catalytic manner.

The protein resides in the secreted. The catalysed reaction is Broad endopeptidase action on proteins including elastin, but rather limited hydrolysis of small-molecule substrates. Assays are conveniently made with hemoglobin, casein or Z-Phe-Arg-NHMec as substrate.. Its activity is regulated as follows. Prematurely activated/folded staphopain A is inhibited by staphostatin A (ScpB), which is probably required to protect staphylococcal cytoplasmic proteins from degradation by ScpA. Also inactivated by heavy metal ions such as Hg(2+) or Ag(+), iodoacetamide, E-64 and human plasma. Functionally, cysteine protease that plays an important role in the inhibition of host innate immune response. Cleaves host elastins found in connective tissues, pulmonary surfactant protein A in the lungs, and the chemokine receptor CXCR2 on leukocytes. Proteolytic cleavage of surfactant protein A impairs bacterial phagocytosis by neutrophils while CXCR2 degradation blocks neutrophil activation and chemotaxis. Additionally, promotes vascular leakage by activating the plasma kallikerin/kinin system, resulting in hypotension. The polypeptide is Staphopain A (sspP) (Staphylococcus aureus).